The sequence spans 359 residues: DNA-directed RNA polymerase RPB3-11 homolog (359 aa).

In the N-terminal section; belongs to the archaeal RpoD/eukaryotic RPB3 RNA polymerase subunit family. This sequence in the C-terminal section; belongs to the archaeal RpoL/eukaryotic RPB11/RPC19 RNA polymerase subunit family. As to quaternary structure, part of the viral DNA-directed RNA polymerase that consists of 8 polII-like subunits (RPB1, RPB2, RPB3, RPB5, RPB6, RPB7, RPB9, RPB10), a capping enzyme and a termination factor.

It is found in the host cytoplasm. The protein resides in the virion. Its function is as follows. Component of the DNA-directed RNA polymerase (RNAP) that catalyzes the transcription in the cytoplasm of viral DNA into RNA using the four ribonucleoside triphosphates as substrates. This chain is DNA-directed RNA polymerase RPB3-11 homolog, found in Ornithodoros (relapsing fever ticks).